A 482-amino-acid polypeptide reads, in one-letter code: Membrane-bound lytic murein transglycosylase F (482 aa).

An N-terminal signal peptide occupies residues 1–13 (MKGLFLRIITALA). The tract at residues 14 to 267 (LLFWAIDMVF…NLKEKYLGHI (254 aa)) is non-LT domain. The interval 268 to 482 (SQFDYVDTRS…NLEEIKENKD (215 aa)) is LT domain. The active site involves glutamate 312.

In the N-terminal section; belongs to the bacterial solute-binding protein 3 family. The protein in the C-terminal section; belongs to the transglycosylase Slt family.

It is found in the cell outer membrane. The enzyme catalyses Exolytic cleavage of the (1-&gt;4)-beta-glycosidic linkage between N-acetylmuramic acid (MurNAc) and N-acetylglucosamine (GlcNAc) residues in peptidoglycan, from either the reducing or the non-reducing ends of the peptidoglycan chains, with concomitant formation of a 1,6-anhydrobond in the MurNAc residue.. Functionally, murein-degrading enzyme that degrades murein glycan strands and insoluble, high-molecular weight murein sacculi, with the concomitant formation of a 1,6-anhydromuramoyl product. Lytic transglycosylases (LTs) play an integral role in the metabolism of the peptidoglycan (PG) sacculus. Their lytic action creates space within the PG sacculus to allow for its expansion as well as for the insertion of various structures such as secretion systems and flagella. The protein is Membrane-bound lytic murein transglycosylase F of Haemophilus influenzae (strain PittEE).